Here is a 247-residue protein sequence, read N- to C-terminus: Type II restriction enzyme SmaI (247 aa).

Requires Mg(2+) as cofactor. It depends on K(+) as a cofactor.

The enzyme catalyses Endonucleolytic cleavage of DNA to give specific double-stranded fragments with terminal 5'-phosphates.. Functionally, a P subtype restriction enzyme that recognizes the double-stranded sequence 5'-CCCGGG-3' and cleaves after C-3. The chain is Type II restriction enzyme SmaI (smaIR) from Serratia marcescens.